We begin with the raw amino-acid sequence, 523 residues long: Monocarboxylate transporter 7 (523 aa).

Residues 1 to 21 (MTQNKLKLCSKANVYTEVPDG) lie on the Cytoplasmic side of the membrane. The chain crosses the membrane as a helical span at residues 22 to 42 (GWGWAVAVSFFFVEVFTYGII). Topologically, residues 43–62 (KTFGVFFNDLMDSFNESNSR) are extracellular. Residues 63 to 83 (ISWIISICVFVLTFSAPLATV) form a helical membrane-spanning segment. Over 84-91 (LSNRFGHR) the chain is Cytoplasmic. A helical transmembrane segment spans residues 92–112 (LVVMLGGLLVSTGMVAASFSQ). At 113 to 118 (EVSHMY) the chain is on the extracellular side. Residues 119–139 (VAIGIISGLGYCFSFLPTVTI) form a helical membrane-spanning segment. Residues 140–149 (LSQYFGKRRS) are Cytoplasmic-facing. Residues 150 to 170 (IVTAVASTGECFAVFAFAPAI) form a helical membrane-spanning segment. The Extracellular portion of the chain corresponds to 171-184 (MALKERIGWRYSLL). Residues 185 to 205 (FVGLLQLNIVIFGALLRPIFI) traverse the membrane as a helical segment. Residues 206–299 (RGPASPKIVI…KEKSFICYAL (94 aa)) are Cytoplasmic-facing. Phosphoserine occurs at positions 234, 237, 240, and 247. Residues 300–320 (FGLFATLGFFAPSLYIIPLGI) form a helical membrane-spanning segment. At 321–330 (SLGIDQDRAA) the chain is on the extracellular side. A helical transmembrane segment spans residues 331-351 (FLLSTMAIAEVFGRIGAGFVL). Over 352–358 (NREPIRK) the chain is Cytoplasmic. The helical transmembrane segment at 359–379 (IYIELICVILLTVSLFAFTFA) threads the bilayer. Topologically, residues 380-381 (TE) are extracellular. The chain crosses the membrane as a helical span at residues 382–402 (FWGLMSCSIFFGFMVGTIGGT). The Cytoplasmic segment spans residues 403-423 (HIPLLAEDDVVGIEKMSSAAG). Residues 424-444 (VYIFIQSIAGLAGPPLAGLLV) form a helical membrane-spanning segment. Over 445–452 (DQSKIYSR) the chain is Extracellular. The helical transmembrane segment at 453–473 (AFYSCAAGMALAAVCLALVRP) threads the bilayer. The Cytoplasmic portion of the chain corresponds to 474–523 (CKMGLCQHHHSGETKVVSHRGKTLQDIPEDFLEMDLAKNEHRVHVQMEPV).

Belongs to the major facilitator superfamily. Monocarboxylate porter (TC 2.A.1.13) family. Forms functional complexes with BSG/CD147 or EMB/GP70 ancillary proteins.

It is found in the basolateral cell membrane. The enzyme catalyses taurine(out) = taurine(in). In terms of biological role, monocarboxylate transporter selective for taurine. May associate with BSG/CD147 or EMB/GP70 ancillary proteins to mediate facilitative efflux or influx of taurine across the plasma membrane. The transport is pH- and sodium-independent. Rather low-affinity, is likely effective for taurine transport in tissues where taurine is present at high concentrations. In Homo sapiens (Human), this protein is Monocarboxylate transporter 7.